The primary structure comprises 398 residues: Spermatogenesis associated 6-like protein (398 aa).

The interval 170 to 215 (KLNGPANNRKKKPKEKNSDQLSKGTPFWGPSPQRLHLHRPTQRNPG) is disordered. Phosphoserine is present on residues S269 and S272.

This sequence belongs to the SPATA6 family.

The protein is Spermatogenesis associated 6-like protein (Spata6l) of Rattus norvegicus (Rat).